A 500-amino-acid polypeptide reads, in one-letter code: Pyridine nucleotide-disulfide oxidoreductase domain-containing protein 1 (500 aa).

M1 is modified (N-acetylmethionine). The interval 211–235 is disordered; sequence TRYTTEGRKKEARSKSKADNVGSAL. Over residues 213 to 228 the composition is skewed to basic and acidic residues; it reads YTTEGRKKEARSKSKA.

This sequence belongs to the class-I pyridine nucleotide-disulfide oxidoreductase family. PYROXD1 subfamily. It depends on FAD as a cofactor.

It localises to the nucleus. The protein localises to the cytoplasm. The protein resides in the myofibril. Its subcellular location is the sarcomere. Probable FAD-dependent oxidoreductase; involved in the cellular oxidative stress response. Required for normal sarcomere structure and muscle fiber integrity. The protein is Pyridine nucleotide-disulfide oxidoreductase domain-containing protein 1 (PYROXD1) of Homo sapiens (Human).